A 226-amino-acid chain; its full sequence is tRNA (guanine-N(1)-)-methyltransferase (226 aa).

S-adenosyl-L-methionine contacts are provided by residues glycine 110 and 130-135 (IGDFIL).

Belongs to the RNA methyltransferase TrmD family. In terms of assembly, homodimer.

The protein resides in the cytoplasm. It carries out the reaction guanosine(37) in tRNA + S-adenosyl-L-methionine = N(1)-methylguanosine(37) in tRNA + S-adenosyl-L-homocysteine + H(+). Functionally, specifically methylates guanosine-37 in various tRNAs. The polypeptide is tRNA (guanine-N(1)-)-methyltransferase (Nitratiruptor sp. (strain SB155-2)).